The following is a 373-amino-acid chain: Core trichothecene cluster (CTC) protein 14 (373 aa).

The protein belongs to the TRI14 family.

Functionally, part of the core gene cluster that mediates the biosynthesis of trichothecenes, a very large family of chemically related bicyclic sesquiterpene compounds acting as mycotoxins, including T2-toxin. The biosynthesis of trichothecenes begins with the cyclization of farnesyl diphosphate to trichodiene and is catalyzed by the trichodiene synthase TRI5. Trichodiene undergoes a series of oxygenations catalyzed by the cytochrome P450 monooxygenase TRI4. TRI4 controls the addition of four oxygens at C-2, C-3, C-11, and the C-12, C-13-epoxide to form the intermediate isotrichotriol. Isotrichotriol then undergoes a non-enzymatic isomerization and cyclization to form isotrichodermol. During this process, the oxygen at the C-2 position becomes the pyran ring oxygen and the hydroxyl group at C-11 is lost. More complex type A trichothecenes are built by modifying isotrichodermol through a series of paired hydroxylation and acetylation or acylation steps. Isotrichodermol is converted to isotrichodermin by the acetyltransferase TRI101. TRI101 encodes a C-3 transacetylase that acts as a self-protection or resistance factor during biosynthesis and that the presence of a free C-3 hydroxyl group is a key component of Fusarium trichothecene phytotoxicity. A second hydroxyl group is added to C-15 by the trichothecene C-15 hydroxylase TRI11, producing 15-decalonectrin, which is then acetylated by TRI3, producing calonectrin. A third hydroxyl group is added at C-4 by the cytochrome P450 monooxygenase TRI13, converting calonectrin to 3,15-diacetoxyspirpenol, which is subsequently acetylated bythe acetyltransferase TRI7. A fourth hydroxyl group is added to C-8 by the cytochrome P450 monooxygenase TRI1, followed by the addition of an isovaleryl moiety by TRI16. Finally, the acetyl group is removed from the C-3 position by the trichothecene C-3 esterase TRI8 to produce T-2 toxin. In Fusarium sporotrichioides, this protein is Core trichothecene cluster (CTC) protein 14.